Reading from the N-terminus, the 549-residue chain is Dihydroxy-acid dehydratase (549 aa).

Residue Asp-78 coordinates Mg(2+). Cys-119 is a [2Fe-2S] cluster binding site. Residues Asp-120 and Lys-121 each coordinate Mg(2+). Lys-121 is subject to N6-carboxylysine. Cys-191 provides a ligand contact to [2Fe-2S] cluster. Glu-441 lines the Mg(2+) pocket. Catalysis depends on Ser-466, which acts as the Proton acceptor.

Belongs to the IlvD/Edd family. In terms of assembly, homodimer. It depends on [2Fe-2S] cluster as a cofactor. Requires Mg(2+) as cofactor.

The enzyme catalyses (2R)-2,3-dihydroxy-3-methylbutanoate = 3-methyl-2-oxobutanoate + H2O. It carries out the reaction (2R,3R)-2,3-dihydroxy-3-methylpentanoate = (S)-3-methyl-2-oxopentanoate + H2O. Its pathway is amino-acid biosynthesis; L-isoleucine biosynthesis; L-isoleucine from 2-oxobutanoate: step 3/4. It functions in the pathway amino-acid biosynthesis; L-valine biosynthesis; L-valine from pyruvate: step 3/4. In terms of biological role, functions in the biosynthesis of branched-chain amino acids. Catalyzes the dehydration of (2R,3R)-2,3-dihydroxy-3-methylpentanoate (2,3-dihydroxy-3-methylvalerate) into 2-oxo-3-methylpentanoate (2-oxo-3-methylvalerate) and of (2R)-2,3-dihydroxy-3-methylbutanoate (2,3-dihydroxyisovalerate) into 2-oxo-3-methylbutanoate (2-oxoisovalerate), the penultimate precursor to L-isoleucine and L-valine, respectively. The polypeptide is Dihydroxy-acid dehydratase (Methanobrevibacter smithii (strain ATCC 35061 / DSM 861 / OCM 144 / PS)).